The chain runs to 305 residues: Elongation factor Ts (305 aa).

An involved in Mg(2+) ion dislocation from EF-Tu region spans residues 81-84; sequence TDFV.

This sequence belongs to the EF-Ts family.

It is found in the cytoplasm. Functionally, associates with the EF-Tu.GDP complex and induces the exchange of GDP to GTP. It remains bound to the aminoacyl-tRNA.EF-Tu.GTP complex up to the GTP hydrolysis stage on the ribosome. The sequence is that of Elongation factor Ts from Nitratiruptor sp. (strain SB155-2).